Reading from the N-terminus, the 1029-residue chain is uncharacterized protein (1029 aa).

A compositionally biased stretch (basic and acidic residues) spans 1–23 (MREWCMLRESRTNTPRRAAERGK). Positions 1-31 (MREWCMLRESRTNTPRRAAERGKRPGGSSVR) are disordered. The Guanylate cyclase domain occupies 39–168 (TALCYDLVGS…AALAMAARLQ (130 aa)). Residue 261-268 (GDAGIGKS) coordinates ATP.

This is an uncharacterized protein from Rhizobium meliloti (strain 1021) (Ensifer meliloti).